A 205-amino-acid polypeptide reads, in one-letter code: Isochorismatase domain-containing protein 2 (205 aa).

Residues S7 and S202 each carry the phosphoserine modification.

This sequence belongs to the isochorismatase family. Interacts with CDKN2A.

The protein resides in the cytoplasm. The protein localises to the nucleus. In Homo sapiens (Human), this protein is Isochorismatase domain-containing protein 2 (ISOC2).